The sequence spans 145 residues: MASLMRKAAVAPAKATRTTVKASASLQRVAQAAGVAVAGFSLALSANAANVKLGADSGALVFEPATVTIKAGDSVTWTNNAGFPHNIVFDEDAVPAGVNADALSHDDYLNAPGESYTAKFDTAGEYGYFCEPHQGAGMVGKVIVQ.

The N-terminal 48 residues, 1–48 (MASLMRKAAVAPAKATRTTVKASASLQRVAQAAGVAVAGFSLALSANA), are a transit peptide targeting the chloroplast. One can recognise a Plastocyanin-like domain in the interval 49-145 (ANVKLGADSG…AGMVGKVIVQ (97 aa)). Positions 85, 130, 133, and 138 each coordinate Cu cation.

Belongs to the plastocyanin family. Requires Cu(2+) as cofactor.

Its subcellular location is the plastid. It is found in the chloroplast thylakoid membrane. In terms of biological role, participates in electron transfer between P700 and the cytochrome b6-f complex in photosystem I. The protein is Plastocyanin, chloroplastic (PETE) of Tetradesmus obliquus (Green alga).